The primary structure comprises 374 residues: Arrestin domain-containing protein 15 (374 aa).

The segment at 344–374 is disordered; the sequence is HHLNRSKAKVSKTEQQQRKTRNIVEENPYFR.

It belongs to the arrestin family.

This Caenorhabditis elegans protein is Arrestin domain-containing protein 15 (arrd-15).